We begin with the raw amino-acid sequence, 478 residues long: PRAME family member 11 (478 aa).

Residues 99-126 (RWKLQVLDLQDVCENFWMVWSEAMAHGC) form an LRR 1; degenerate repeat. One copy of the LRR 2; degenerate repeat lies at 181–205 (HLCCKKLKILGMPFRNIRSILKMVN). An LRR 3; degenerate repeat occupies 206–232 (LDCIQEVEVNCKWILPILTQFTPYLGH). The stretch at 233–268 (LRNLQKLVLSHMDVSRYVSPEQKKEIVTQFTTQFLK) is one LRR 4; degenerate repeat. LRR repeat units follow at residues 269–294 (LRCL…LSCL), 295–326 (KTSL…SQLK), 327–347 (TLDL…QILL), 351–378 (AATL…ALSR), and 379–403 (CFEL…LLSH).

It belongs to the PRAME family.

The sequence is that of PRAME family member 11 from Homo sapiens (Human).